A 126-amino-acid chain; its full sequence is MIRVRRGYIARRRRTKFFLFASTFRGAHSRLTRTTTQQKMRALVSAHRDRGRQKRDFRRLWITRINAVTRENGGSYSRLIHDLYKGQLLLNRKIPAQLAISNGNCLYMISNEIGSANKEIGRSSSE.

The protein belongs to the bacterial ribosomal protein bL20 family.

Its subcellular location is the plastid. The protein resides in the chloroplast. In terms of biological role, binds directly to 23S ribosomal RNA and is necessary for the in vitro assembly process of the 50S ribosomal subunit. It is not involved in the protein synthesizing functions of that subunit. This Illicium oligandrum (Star anise) protein is Large ribosomal subunit protein bL20c.